The following is a 523-amino-acid chain: Major facilitator-type transporter psiT2 (523 aa).

Residues 1–26 (MSLERSTSPNPTERTSLLSDTASTIS) are compositionally biased toward polar residues. Residues 1–45 (MSLERSTSPNPTERTSLLSDTASTISSRDDVEQSSLKQRRTPIPT) are disordered. Helical transmembrane passes span 88-108 (FYSG…IFML), 125-145 (ALGI…TMML), 149-169 (VCAG…SELT), 175-195 (ALVV…GPLI), and 221-241 (FLPS…GYFF). Residue Asn269 is glycosylated (N-linked (GlcNAc...) asparagine). 3 helical membrane-spanning segments follow: residues 317–337 (FLMF…FTAV), 352–372 (AFSV…PWVL), and 382–402 (HFCM…NPLA). The N-linked (GlcNAc...) asparagine glycan is linked to Asn410. The next 3 membrane-spanning stretches (helical) occupy residues 419-439 (GLLY…VMAF), 455-474 (LATA…AFCP), and 488-508 (NILG…VGVW).

Belongs to the major facilitator superfamily. TCR/Tet family.

The protein resides in the membrane. Its function is as follows. Major facilitator-type transporter; part of the gene cluster that mediates the biosynthesis of psilocybin, a psychotropic tryptamine-derived natural product. The chain is Major facilitator-type transporter psiT2 from Psilocybe cubensis (Psychedelic mushroom).